Here is a 158-residue protein sequence, read N- to C-terminus: SsrA-binding protein (158 aa).

Basic and acidic residues predominate over residues 133 to 148; that stretch reads KAQDKRETSAKRDWNR. The interval 133–158 is disordered; that stretch reads KAQDKRETSAKRDWNRQKARLLKQNG. Residues 149 to 158 are compositionally biased toward basic residues; that stretch reads QKARLLKQNG.

The protein belongs to the SmpB family.

The protein resides in the cytoplasm. Required for rescue of stalled ribosomes mediated by trans-translation. Binds to transfer-messenger RNA (tmRNA), required for stable association of tmRNA with ribosomes. tmRNA and SmpB together mimic tRNA shape, replacing the anticodon stem-loop with SmpB. tmRNA is encoded by the ssrA gene; the 2 termini fold to resemble tRNA(Ala) and it encodes a 'tag peptide', a short internal open reading frame. During trans-translation Ala-aminoacylated tmRNA acts like a tRNA, entering the A-site of stalled ribosomes, displacing the stalled mRNA. The ribosome then switches to translate the ORF on the tmRNA; the nascent peptide is terminated with the 'tag peptide' encoded by the tmRNA and targeted for degradation. The ribosome is freed to recommence translation, which seems to be the essential function of trans-translation. In Jannaschia sp. (strain CCS1), this protein is SsrA-binding protein.